The following is a 1291-amino-acid chain: GRB10-interacting GYF protein 2 (1291 aa).

Ala2 carries the post-translational modification N-acetylalanine. Phosphoserine is present on residues Ser19, Ser26, and Ser30. An omega-N-methylarginine mark is found at Arg107, Arg119, and Arg121. Positions 112 to 132 (GTVVGAPRGRSSSRGRGRGRG) are disordered. A Phosphoserine modification is found at Ser140. 3 disordered regions span residues 148 to 196 (FGRG…RKHE), 209 to 248 (REEQ…GWRE), and 267 to 484 (RGYR…TEPD). Position 150 is an omega-N-methylarginine (Arg150). Residues 152–183 (GGREMHRSQSWEERGDRRFEKPGRKDVGRPNF) show a composition bias toward basic and acidic residues. Phosphoserine occurs at positions 161, 190, and 237. Basic and acidic residues predominate over residues 226–248 (SRRDGERWRPHSPDGPRSTGWRE). The DDX6 binding motif signature appears at 281-311 (DDRDSLPEWCLEDAEEEMGTFDSSGAFLSLK). Positions 290 to 299 (CLEDAEEEMG) are enriched in acidic residues. Positions 313 to 364 (VQKEPIPEEQEMDFRPVEEGEERSDSDSSHNEEAKEPDKTNRREGEKTDRAG) are enriched in basic and acidic residues. Residues 371–393 (VPQTSLSSARPGTPSDHQPQEAT) are compositionally biased toward polar residues. Thr383 bears the Phosphothreonine mark. The span at 394 to 415 (QFERKDEPKAEQVEKAEEENRS) shows a compositional bias: basic and acidic residues. Positions 534–582 (MQKWYYKDPQGEIQGPFNNQEMAEWFQAGYFTMSLLVKRACDESFQPLG) constitute a GYF domain. Positions 548–564 (GPFNNQEMAEWFQAGYF) are required for GRB10-binding. Ser594 carries the phosphoserine modification. 5 disordered regions span residues 732–794 (KAKA…QEEA), 846–937 (EEAA…SNTA), 958–998 (ERQL…SKPA), 1011–1053 (EARQ…SVWG), and 1090–1118 (KEVG…NRQN). Residues 846 to 898 (EEAAKWAREEEEAQRRLEENRLRMEEEAARLRHEEEERKRKELELQRQKDLMR) show a composition bias toward basic and acidic residues. Low complexity predominate over residues 899–924 (QRQQQQEALRRLQQQQQQQQLAQMKL). Residues 925 to 937 (PSSSTWGQQSNTA) show a composition bias toward polar residues. Positions 958 to 973 (ERQLREEQRRQQRELM) are enriched in basic and acidic residues. The segment covering 977–986 (QQQQQQQQQQ) has biased composition (low complexity). Ser995 carries the phosphoserine modification. The span at 1015–1031 (MQKQQQQQQQQQQQHQQ) shows a compositional bias: low complexity. Residues 1032 to 1053 (SNRARNSTHSNLHTSLGNSVWG) show a composition bias toward polar residues. Over residues 1096-1110 (NSTNKNKNNASLSKS) the composition is skewed to low complexity. Residue Lys1129 forms a Glycyl lysine isopeptide (Lys-Gly) (interchain with G-Cter in SUMO2) linkage. Disordered stretches follow at residues 1202–1223 (AKQK…QDSV) and 1239–1263 (QSNN…KMVR). A compositionally biased stretch (low complexity) spans 1208-1220 (QQRQQQQQQQQQQ). Position 1276 is a phosphoserine (Ser1276).

Belongs to the GIGYF family. In terms of assembly, component of the 4EHP-GYF2 complex, at least composed of EIF4E2, GIGYF2 and ZNF598. Interacts (via the 4EHP-binding motif) with EIF4E2; the interaction is direct. Interacts with ZFP36/TTP (via P-P-P-P-G repeats); the interaction is direct. Interacts with GRB10. Interacts (via DDX6 motif) with DDX6 (via RecA-like domain 2). As to expression, expressed in heart, liver, kidney and brain as well as in testis.

Functionally, key component of the 4EHP-GYF2 complex, a multiprotein complex that acts as a repressor of translation initiation. In the 4EHP-GYF2 complex, acts as a factor that bridges EIF4E2 to ZFP36/TTP, linking translation repression with mRNA decay. Also recruits and bridges the association of the 4EHP complex with the decapping effector protein DDX6, which is required for the ZFP36/TTP-mediated down-regulation of AU-rich mRNA. May act cooperatively with GRB10 to regulate tyrosine kinase receptor signaling, including IGF1 and insulin receptors. In association with EIF4E2, assists ribosome-associated quality control (RQC) by sequestering the mRNA cap, blocking ribosome initiation and decreasing the translational load on problematic messages. Part of a pathway that works in parallel to RQC-mediated degradation of the stalled nascent polypeptide. GIGYF2 and EIF4E2 work downstream and independently of ZNF598, which seems to work as a scaffold that can recruit them to faulty mRNA even if alternative recruitment mechanisms may exist. This is GRB10-interacting GYF protein 2 from Mus musculus (Mouse).